Consider the following 91-residue polypeptide: MKTLLLTLVVMTIVCLDLGYTLICFISSHDSVTCAPGENVCFLKSWCDAWCGSRGKKLSFGCAATCPRVNPGIDIECCSTDNCNPHPKLRP.

A signal peptide spans 1–21 (MKTLLLTLVVMTIVCLDLGYT). Intrachain disulfides connect Cys-24–Cys-41, Cys-34–Cys-62, Cys-47–Cys-51, Cys-66–Cys-77, and Cys-78–Cys-83.

This sequence belongs to the three-finger toxin family. Long-chain subfamily. Type II alpha-neurotoxin sub-subfamily. As to expression, expressed by the venom gland.

Its subcellular location is the secreted. Functionally, binds with high affinity to muscular (alpha-1/CHRNA1) and neuronal (alpha-7/CHRNA7) nicotinic acetylcholine receptor (nAChR) and inhibits acetylcholine from binding to the receptor, thereby impairing neuromuscular and neuronal transmission. This Ophiophagus hannah (King cobra) protein is Long neurotoxin LNTX28.